The chain runs to 350 residues: Phosphoribosylformylglycinamidine cyclo-ligase (350 aa).

This sequence belongs to the AIR synthase family.

The protein localises to the cytoplasm. The enzyme catalyses 2-formamido-N(1)-(5-O-phospho-beta-D-ribosyl)acetamidine + ATP = 5-amino-1-(5-phospho-beta-D-ribosyl)imidazole + ADP + phosphate + H(+). It participates in purine metabolism; IMP biosynthesis via de novo pathway; 5-amino-1-(5-phospho-D-ribosyl)imidazole from N(2)-formyl-N(1)-(5-phospho-D-ribosyl)glycinamide: step 2/2. The sequence is that of Phosphoribosylformylglycinamidine cyclo-ligase from Cupriavidus taiwanensis (strain DSM 17343 / BCRC 17206 / CCUG 44338 / CIP 107171 / LMG 19424 / R1) (Ralstonia taiwanensis (strain LMG 19424)).